The sequence spans 258 residues: Hydroxyacylglutathione hydrolase (258 aa).

Positions 54, 56, 58, 59, 113, 138, and 176 each coordinate Zn(2+).

It belongs to the metallo-beta-lactamase superfamily. Glyoxalase II family. Monomer. Zn(2+) is required as a cofactor.

The enzyme catalyses an S-(2-hydroxyacyl)glutathione + H2O = a 2-hydroxy carboxylate + glutathione + H(+). Its pathway is secondary metabolite metabolism; methylglyoxal degradation; (R)-lactate from methylglyoxal: step 2/2. Functionally, thiolesterase that catalyzes the hydrolysis of S-D-lactoyl-glutathione to form glutathione and D-lactic acid. This chain is Hydroxyacylglutathione hydrolase, found in Synechococcus sp. (strain ATCC 27144 / PCC 6301 / SAUG 1402/1) (Anacystis nidulans).